The following is a 782-amino-acid chain: Protein phosphatase 1 regulatory subunit 12C (782 aa).

Residues 1 to 17 show a composition bias toward low complexity; the sequence is MSGEDGPAAGPGAAAAA. The segment at 1 to 43 is disordered; sequence MSGEDGPAAGPGAAAAAARERRREQLRQWGARAGAEPGPGERR. N-acetylserine is present on Ser-2. ANK repeat units follow at residues 100–129, 133–162, 226–255, and 259–288; these read DGISALHQACIDENLEVVRFLVEQGATVNQ, EGWTPLHVAASCGYLDIARYLLSHGANIAA, TGASALHVAAAKGYIEVMRLLLQAGYDPEL, and DGWTPLHAAAHWGVEDACRLLAEHGGGMDS. Positions 297–329 form a coiled coil; that stretch reads CDLADEEVLSLLEELARKQEDLRNQKEASQSRG. Positions 316–686 are disordered; that stretch reads EDLRNQKEAS…EEPDGGFRTL (371 aa). Residues 323-337 show a composition bias toward polar residues; the sequence is EASQSRGQEPQAPSS. The span at 349–365 shows a compositional bias: basic and acidic residues; it reads SSREKISLQDLSKERRP. Residues 374 to 383 are compositionally biased toward acidic residues; the sequence is QDEDEGEEGP. 5 positions are modified to phosphoserine: Ser-399, Ser-407, Ser-427, Ser-452, and Ser-509. Positions 449-463 are enriched in polar residues; that stretch reads RSASSSWLEGTSTQA. The segment covering 537–546 has biased composition (basic and acidic residues); it reads VRDEESESQR. Positions 547-557 are enriched in basic residues; it reads KARSRLMRQSR. Thr-560 carries the post-translational modification Phosphothreonine; by CDC42BP and ROCK2. A compositionally biased stretch (basic and acidic residues) spans 567-583; the sequence is DLKEAEKAAGKAPESEK. Residues Ser-604 and Ser-647 each carry the phosphoserine modification. Over residues 670-680 the composition is skewed to acidic residues; that stretch reads PEPEPESEEPD. Positions 681 to 782 form a coiled coil; it reads GGFRTLYAEL…LIRVISKLSK (102 aa).

As to quaternary structure, PP1 comprises a catalytic subunit, PPP1CA, PPP1CB or PPP1CC, and one or several targeting or regulatory subunits. PPP1R12C mediates binding to myosin. Interacts via its N-terminus with PPP1CB. Interacts with IL16. Interacts with the coiled-coil domain of MPRIP. Interacts with NOD2. Phosphorylation at Thr-560 is essential for its interaction with PPP1CB. In terms of tissue distribution, ubiquitously expressed. Highly expressed in heart.

It localises to the cytoplasm. Its subcellular location is the cytoskeleton. It is found in the stress fiber. Regulates myosin phosphatase activity. This chain is Protein phosphatase 1 regulatory subunit 12C, found in Homo sapiens (Human).